The following is a 517-amino-acid chain: Bifunctional purine biosynthesis protein PurH (517 aa).

Positions 1 to 146 constitute an MGS-like domain; the sequence is MAPIALLSVS…KNHAHVAVLT (146 aa).

It belongs to the PurH family.

It carries out the reaction (6R)-10-formyltetrahydrofolate + 5-amino-1-(5-phospho-beta-D-ribosyl)imidazole-4-carboxamide = 5-formamido-1-(5-phospho-D-ribosyl)imidazole-4-carboxamide + (6S)-5,6,7,8-tetrahydrofolate. It catalyses the reaction IMP + H2O = 5-formamido-1-(5-phospho-D-ribosyl)imidazole-4-carboxamide. It participates in purine metabolism; IMP biosynthesis via de novo pathway; 5-formamido-1-(5-phospho-D-ribosyl)imidazole-4-carboxamide from 5-amino-1-(5-phospho-D-ribosyl)imidazole-4-carboxamide (10-formyl THF route): step 1/1. The protein operates within purine metabolism; IMP biosynthesis via de novo pathway; IMP from 5-formamido-1-(5-phospho-D-ribosyl)imidazole-4-carboxamide: step 1/1. This chain is Bifunctional purine biosynthesis protein PurH, found in Prochlorococcus marinus (strain MIT 9313).